Here is a 337-residue protein sequence, read N- to C-terminus: Phosphate acyltransferase (337 aa).

The protein belongs to the PlsX family. Homodimer. Probably interacts with PlsY.

It localises to the cytoplasm. The catalysed reaction is a fatty acyl-[ACP] + phosphate = an acyl phosphate + holo-[ACP]. Its pathway is lipid metabolism; phospholipid metabolism. In terms of biological role, catalyzes the reversible formation of acyl-phosphate (acyl-PO(4)) from acyl-[acyl-carrier-protein] (acyl-ACP). This enzyme utilizes acyl-ACP as fatty acyl donor, but not acyl-CoA. The sequence is that of Phosphate acyltransferase from Listeria monocytogenes serotype 4b (strain F2365).